A 216-amino-acid polypeptide reads, in one-letter code: Pyrrolidone-carboxylate peptidase (216 aa).

Catalysis depends on residues Glu-80, Cys-143, and His-168.

The protein belongs to the peptidase C15 family. Homotetramer.

It is found in the cytoplasm. It carries out the reaction Release of an N-terminal pyroglutamyl group from a polypeptide, the second amino acid generally not being Pro.. In terms of biological role, removes 5-oxoproline from various penultimate amino acid residues except L-proline. This is Pyrrolidone-carboxylate peptidase from Cupriavidus necator (strain ATCC 17699 / DSM 428 / KCTC 22496 / NCIMB 10442 / H16 / Stanier 337) (Ralstonia eutropha).